We begin with the raw amino-acid sequence, 774 residues long: Chondroitin sulfate synthase 2 (774 aa).

Topologically, residues 1–15 (MRASLLLSVLRPAGP) are cytoplasmic. Residues 16 to 34 (VAVGISLGFTLSLLSVTWV) form a helical; Signal-anchor for type II membrane protein membrane-spanning segment. Over 35–774 (EEPCGPGPPQ…LFEQEQGNST (740 aa)) the chain is Lumenal. Residues 37 to 103 (PCGPGPPQPG…AQPGQATKKA (67 aa)) are disordered. Residues 54 to 67 (GNTNAARRPNSVQP) are compositionally biased toward polar residues. N138 and N361 each carry an N-linked (GlcNAc...) asparagine glycan. Residue D616 participates in a divalent metal cation binding.

It belongs to the chondroitin N-acetylgalactosaminyltransferase family. In terms of assembly, interacts with PRKN. Mn(2+) is required as a cofactor. It depends on Co(2+) as a cofactor. Isoform 1, isoform 2 and isoform 3 are expressed in brain (at protein level).

The protein resides in the golgi apparatus. Its subcellular location is the golgi stack membrane. It localises to the cytoplasm. It is found in the cytosol. The protein localises to the mitochondrion. The protein resides in the mitochondrion matrix. The enzyme catalyses 3-O-(beta-D-GlcA-(1-&gt;3)-beta-D-GalNAc-(1-&gt;4)-beta-D-GlcA-(1-&gt;3)-beta-D-Gal-(1-&gt;3)-beta-D-Gal-(1-&gt;4)-beta-D-Xyl)-L-seryl-[protein] + UDP-N-acetyl-alpha-D-galactosamine = 3-O-(beta-D-GalNAc-(1-&gt;4)-beta-D-GlcA-(1-&gt;3)-beta-D-GalNAc-(1-&gt;4)-beta-D-GlcA-(1-&gt;3)-beta-D-Gal-(1-&gt;3)-beta-D-Gal-(1-&gt;4)-beta-D-Xyl)-L-seryl-[protein] + UDP + H(+). It catalyses the reaction 3-O-{beta-D-GlcA-(1-&gt;3)-[beta-D-GalNAc-(1-&gt;4)-beta-D-GlcA-(1-&gt;3)](n)-beta-D-GalNAc-(1-&gt;4)-beta-D-GlcA-(1-&gt;3)-beta-D-Gal-(1-&gt;3)-beta-D-Gal-(1-&gt;4)-beta-D-Xyl}-L-seryl-[protein] + UDP-N-acetyl-alpha-D-galactosamine = 3-O-{[beta-D-GalNAc-(1-&gt;4)-beta-D-GlcA-(1-&gt;3)](n+1)-beta-D-GalNAc-(1-&gt;4)-beta-D-GlcA-(1-&gt;3)-beta-D-Gal-(1-&gt;3)-beta-D-Gal-(1-&gt;4)-beta-D-Xyl}-L-seryl-[protein] + UDP + H(+). The catalysed reaction is 3-O-(beta-D-GalNAc-(1-&gt;4)-beta-D-GlcA-(1-&gt;3)-beta-D-Gal-(1-&gt;3)-beta-D-Gal-(1-&gt;4)-beta-D-Xyl)-L-seryl-[protein] + UDP-alpha-D-glucuronate = 3-O-(beta-D-GlcA-(1-&gt;3)-beta-D-GalNAc-(1-&gt;4)-beta-D-GlcA-(1-&gt;3)-beta-D-Gal-(1-&gt;3)-beta-D-Gal-(1-&gt;4)-beta-D-Xyl)-L-seryl-[protein] + UDP + H(+). It carries out the reaction 3-O-{[beta-D-GalNAc-(1-&gt;4)-beta-D-GlcA-(1-&gt;3)](n)-beta-D-GalNAc-(1-&gt;4)-beta-D-GlcA-(1-&gt;3)-beta-D-Gal-(1-&gt;3)-beta-D-Gal-(1-&gt;4)-beta-D-Xyl}-L-seryl-[protein] + UDP-alpha-D-glucuronate = 3-O-{beta-D-GlcA-(1-&gt;3)-[beta-D-GalNAc-(1-&gt;4)-beta-D-GlcA-(1-&gt;3)](n)-beta-D-GalNAc-(1-&gt;4)-beta-D-GlcA-(1-&gt;3)-beta-D-Gal-(1-&gt;3)-beta-D-Gal-(1-&gt;4)-beta-D-Xyl}-L-seryl-[protein] + UDP + H(+). In terms of biological role, has both beta-1,3-glucuronic acid and beta-1,4-N-acetylgalactosamine transferase activity. Transfers glucuronic acid (GlcUA) from UDP-GlcUA and N-acetylgalactosamine (GalNAc) from UDP-GalNAc to the non-reducing end of the elongating chondroitin polymer. Seems to act as a specific activating factor for CHSY1 in chondroitin polymerization. May facilitate PRKN transport into the mitochondria. In collaboration with PRKN, may enhance cell viability and protect cells from oxidative stress. The protein is Chondroitin sulfate synthase 2 of Mus musculus (Mouse).